Reading from the N-terminus, the 679-residue chain is MAPKMVISLGSSRRRKRGEMLFRFEAFCQPGYPANFAGAGGFRDNVRTLLGFAHLEAGVHGETKCWSFQLELHRHPPTVVRLFVVEEEVAASPHRQCHLCRHIGWGRHLICSKRYHFLLPRRESAAEADGLCFAINHGGGGGAEKASSKGTTTTASSRGHLLHGVVHLNGYGHLVALHGLEGGSDFVSGHQIMDLWDRICSALHVRTVSLVDTARKGHMELRLLHGVAYGETWFGRWGYRYGRPSYGVALPSYRQSLHVLGSMPLCVLVPHLSCFSQELPMVVTKYQAISGHKLLSLGDLLRFMLELRARLPATSVTAMDYRGIMSEASCRWSAKRVDMAARAVVDALRRAEPAARWVTRQEVRDAARAYIGDTGLLDFVLKSLGNHIVGNYVVRRTMNPVTKVLEYCLEDVSSVLPAVAAGGGVPAQGKMRVRFQLTRAQLMRDLVHLYRHVLKEPSQALTGGAFGAIPVAVRMVLDIKHFVKDYHEGQAAASSNGGGGFGHPHINLCCTLLVSNGSPELAPPYETVTLPAHATVGELKWEAQRVFSEMYLGLRSFAADSVVGVGADQEGLPVLGLVDVGSAVVVQGSVGEQINGEDHERKEEAAAAAVCEGSGGGERVVDCACGAVDDDGERMACCDICEAWQHTRCAGIADTEDAPHVFLCSRCDNDVVSFPSFNC.

The segment at 620 to 670 adopts a PHD-type zinc-finger fold; that stretch reads VVDCACGAVDDDGERMACCDICEAWQHTRCAGIADTEDAPHVFLCSRCDND.

In terms of biological role, probable transcriptional activator required for tapetal programmed cell death (PCD) and degeneration, and pollen development in anthers. This is PHD finger protein PERSISTENT TAPETAL CELL 1 from Oryza sativa subsp. japonica (Rice).